Consider the following 927-residue polypeptide: 2-oxoadipate dehydrogenase complex component E1 (927 aa).

The protein belongs to the alpha-ketoglutarate dehydrogenase family. As to quaternary structure, the 2-oxoadipate dehydrogenase complex is composed of OADH (2-oxoadipate dehydrogenase; E1a), DLST (dihydrolipoamide succinyltransferase; E2) and DLD (dihydrolipoamide dehydrogenase; E3). E1a functional unit is a dimer. Thiamine diphosphate is required as a cofactor.

The protein localises to the mitochondrion. It carries out the reaction N(6)-[(R)-lipoyl]-L-lysyl-[protein] + 2-oxoadipate + H(+) = N(6)-[(R)-S(8)-glutaryldihydrolipoyl]-L-lysyl-[protein] + CO2. The protein operates within amino-acid degradation. Its function is as follows. 2-oxoadipate dehydrogenase (E1a) component of the 2-oxoadipate dehydrogenase complex (OADHC). Participates in the first step, rate limiting for the overall conversion of 2-oxoadipate (alpha-ketoadipate) to glutaryl-CoA and CO(2) catalyzed by the whole OADHC. Catalyzes the irreversible decarboxylation of 2-oxoadipate via the thiamine diphosphate (ThDP) cofactor and subsequent transfer of the decarboxylated acyl intermediate on an oxidized dihydrolipoyl group that is covalently amidated to the E2 enzyme (dihydrolipoyllysine-residue succinyltransferase or DLST). Can catalyze the decarboxylation of 2-oxoglutarate in vitro, but at a much lower rate than 2-oxoadipate. Responsible for the last step of L-lysine, L-hydroxylysine and L-tryptophan catabolism with the common product being 2-oxoadipate. In Xenopus laevis (African clawed frog), this protein is 2-oxoadipate dehydrogenase complex component E1 (dhtkd1).